The sequence spans 556 residues: Tripartite motif-containing protein 16 (556 aa).

Residues Met1–Ala60 form a disordered region. Basic and acidic residues predominate over residues Val33–Ala56. B box-type zinc fingers lie at residues Glu64–Pro113 and Gln117–Ser156. Ser107 carries the post-translational modification Phosphoserine. Coiled coils occupy residues Asn163 to Ala266 and Asn312 to Glu332. Ser195 bears the Phosphoserine mark. In terms of domain architecture, B30.2/SPRY spans Tyr347–Glu545.

This sequence belongs to the TRIM/RBCC family. Homodimerizes via its coiled-coil domain. Heterodimerizes with MID1, TRIM24 and PML. Interacts with Galectin-3/LGALS3 in a ULK1-dependent manner; this interaction mediates autophagy of damage endomembranes. Interacts with BECN1. Interacts with ATG16L1. Interacts with p62/SQSTM and LC3B/MAP1LC3B. In terms of processing, phosphorylated by ULK1. Auto-ubiquitinates via its B-Boxes. In terms of tissue distribution, widely expressed. Expressed in basal keratinocytes.

The protein localises to the cytoplasm. The enzyme catalyses S-ubiquitinyl-[E2 ubiquitin-conjugating enzyme]-L-cysteine + [acceptor protein]-L-lysine = [E2 ubiquitin-conjugating enzyme]-L-cysteine + N(6)-ubiquitinyl-[acceptor protein]-L-lysine.. Its function is as follows. E3 ubiquitin ligase that plays an essential role in the organization of autophagic response and ubiquitination upon lysosomal and phagosomal damages. Plays a role in the stress-induced biogenesis and degradation of protein aggresomes by regulating the p62-KEAP1-NRF2 signaling and particularly by modulating the ubiquitination levels and thus stability of NRF2. Acts as a scaffold protein and facilitates autophagic degradation of protein aggregates by interacting with p62/SQSTM, ATG16L1 and LC3B/MAP1LC3B. In turn, protects the cell against oxidative stress-induced cell death as a consequence of endomembrane damage. In Mus musculus (Mouse), this protein is Tripartite motif-containing protein 16 (Trim16).